A 161-amino-acid polypeptide reads, in one-letter code: Allophycocyanin subunit alpha-B (161 aa).

Asparagine 71 carries the N4-methylasparagine modification. Cysteine 81 provides a ligand contact to (2R,3E)-phycocyanobilin.

The protein belongs to the phycobiliprotein family. Heterohexamer of two alpha chains, one alpha-B chain and three beta chains. In terms of processing, contains one covalently linked bilin chromophore.

Its subcellular location is the cellular thylakoid membrane. Its function is as follows. Light-harvesting photosynthetic bile pigment-protein from the phycobiliprotein complex. Allophycocyanin has a maximum absorption at approximately 654 nanometers. The protein is Allophycocyanin subunit alpha-B (apcD) of Synechocystis sp. (strain ATCC 27184 / PCC 6803 / Kazusa).